A 414-amino-acid chain; its full sequence is Gamma-glutamyl phosphate reductase (414 aa).

Belongs to the gamma-glutamyl phosphate reductase family.

The protein resides in the cytoplasm. The enzyme catalyses L-glutamate 5-semialdehyde + phosphate + NADP(+) = L-glutamyl 5-phosphate + NADPH + H(+). It participates in amino-acid biosynthesis; L-proline biosynthesis; L-glutamate 5-semialdehyde from L-glutamate: step 2/2. Catalyzes the NADPH-dependent reduction of L-glutamate 5-phosphate into L-glutamate 5-semialdehyde and phosphate. The product spontaneously undergoes cyclization to form 1-pyrroline-5-carboxylate. The chain is Gamma-glutamyl phosphate reductase from Clostridium beijerinckii (strain ATCC 51743 / NCIMB 8052) (Clostridium acetobutylicum).